A 1107-amino-acid polypeptide reads, in one-letter code: Phospholipid-transporting ATPase 2 (1107 aa).

The Cytoplasmic segment spans residues 1–33 (MKRFVYINDDEASKELCCDNRISNRKYTLWNFL). The chain crosses the membrane as a helical span at residues 34-55 (PKNLWEQFSRFMNQYFLLIACL). Over 56-60 (QLWSL) the chain is Extracellular. The helical transmembrane segment at 61–83 (ITPVNPASTWGPLIFIFAVSASK) threads the bilayer. Residues 84 to 268 (EAWDDYHRYL…TAMDAMIDKL (185 aa)) are Cytoplasmic-facing. The chain crosses the membrane as a helical span at residues 269–290 (TGAIFVFQIVVVLVLGIAGNVW). Topologically, residues 291 to 315 (KDTEARKQWYVQYPEEAPWYELLVI) are extracellular. A helical transmembrane segment spans residues 316 to 333 (PLRFELLCSIMIPISIKV). The Cytoplasmic segment spans residues 334-807 (SLDLVKGLYA…HGRYSYNRTA (474 aa)). The active-site 4-aspartylphosphate intermediate is D381. The Mg(2+) site is built by D752 and D756. A helical transmembrane segment spans residues 808 to 827 (FLSQYSFYKSLLICFIQIFF). At 828–841 (SFISGVSGTSLFNS) the chain is on the extracellular side. Residues 842–860 (VSLMAYNVFYTSVPVLVSV) form a helical membrane-spanning segment. Topologically, residues 861-890 (IDKDLSEASVMQHPQILFYCQAGRLLNPST) are cytoplasmic. The helical transmembrane segment at 891–912 (FAGWFGRSLFHAIIVFVITIHA) threads the bilayer. The Extracellular segment spans residues 913–919 (YAYEKSE). The helical transmembrane segment at 920–942 (MEELGMVALSGCIWLQAFVVAQE) threads the bilayer. At 943 to 948 (TNSFTV) the chain is on the cytoplasmic side. Residues 949–969 (LQHLSIWGNLVGFYAINFLFS) form a helical membrane-spanning segment. Residues 970–982 (AIPSSGMYTIMFR) lie on the Extracellular side of the membrane. The chain crosses the membrane as a helical span at residues 983–1007 (LCSQPSYWITMFLIVGAGMGPIFAL). At 1008-1107 (KYFRYTYRPS…SGYTRNCKDN (100 aa)) the chain is on the cytoplasmic side. Positions 1048–1075 (DLSPISITQPKNRSPVYEPLLSDSPNAT) are disordered. Residue S1050 is modified to Phosphoserine.

This sequence belongs to the cation transport ATPase (P-type) (TC 3.A.3) family. Type IV subfamily. In terms of assembly, interacts with ALIS1, ALIS3 and ALIS5 in a heterologous system.

It is found in the endoplasmic reticulum membrane. The protein localises to the prevacuolar compartment membrane. It carries out the reaction ATP + H2O + phospholipidSide 1 = ADP + phosphate + phospholipidSide 2.. Functionally, involved in transport of phospholipids. Contributes to transmembrane flipping of lipids. Requires an interaction with a protein of the ALIS family for activity. Specific for phosphatidylserine and has no activity with lysolipid, phosphatidylcholine or phosphatidylethanolamine. The protein is Phospholipid-transporting ATPase 2 of Arabidopsis thaliana (Mouse-ear cress).